A 113-amino-acid polypeptide reads, in one-letter code: Cholecystoxin (113 aa).

The signal sequence occupies residues Met-1–Gly-20. The propeptide occupies Gln-21–Arg-79. Residues Ala-77–Gly-97 are disordered. Position 95 is a sulfotyrosine (Tyr-95). Phenylalanine amide is present on Phe-101. Residues Gly-102–Ser-113 constitute a propeptide that is removed on maturation.

It belongs to the gastrin/cholecystokinin family. In terms of tissue distribution, expressed by the mandibular venom gland.

Its subcellular location is the secreted. Its function is as follows. Cholecystokinin-22: hypotensive neuropeptide that binds cholecystokinin receptor type A receptor (CCKAR). Functionally, cholecystokinin-8: hypotensive neuropeptide that binds cholecystokinin receptor type A receptor (CCKAR). The protein is Cholecystoxin of Varanus varius (Lace monitor lizard).